An 83-amino-acid polypeptide reads, in one-letter code: Delta-conotoxin-like MVIC (83 aa).

Positions 1-22 (MKLTCVMIVAVLFLTTWTFVTA) are cleaved as a signal peptide. Positions 23–49 (DDSRYGLKNLFPKARHEMKNPEASKLN) are excised as a propeptide. 3 disulfide bridges follow: Cys-54–Cys-69, Cys-61–Cys-73, and Cys-68–Cys-78. A 4-hydroxyproline mark is found at Pro-56 and Pro-65.

It belongs to the conotoxin O1 superfamily. Expressed by the venom duct.

The protein resides in the secreted. Functionally, delta-conotoxins bind to site 6 of voltage-gated sodium channels (Nav) and inhibit the inactivation process. The polypeptide is Delta-conotoxin-like MVIC (Conus magus (Magical cone)).